Reading from the N-terminus, the 517-residue chain is Crotonobetaine/carnitine--CoA ligase (517 aa).

It belongs to the ATP-dependent AMP-binding enzyme family.

The enzyme catalyses 4-(trimethylamino)butanoate + ATP + CoA = 4-(trimethylamino)butanoyl-CoA + AMP + diphosphate. The catalysed reaction is crotonobetaine + ATP + CoA = crotonobetainyl-CoA + AMP + diphosphate. It carries out the reaction (R)-carnitine + ATP + CoA = (R)-carnitinyl-CoA + AMP + diphosphate. It functions in the pathway amine and polyamine metabolism; carnitine metabolism. Functionally, catalyzes the transfer of CoA to carnitine, generating the initial carnitinyl-CoA needed for the CaiB reaction cycle. Also has activity toward crotonobetaine and gamma-butyrobetaine. The polypeptide is Crotonobetaine/carnitine--CoA ligase (Salmonella paratyphi B (strain ATCC BAA-1250 / SPB7)).